A 139-amino-acid chain; its full sequence is Probable trafficking protein particle complex subunit 2 (139 aa).

The protein belongs to the TRAPP small subunits family. Sedlin subfamily. As to quaternary structure, part of the multisubunit TRAPP (transport protein particle) complex.

The protein resides in the cytoplasm. Its subcellular location is the perinuclear region. It localises to the endoplasmic reticulum. The protein localises to the golgi apparatus. Functionally, may play a role in vesicular transport from endoplasmic reticulum to Golgi. Involved in dsRNA uptake. In Drosophila melanogaster (Fruit fly), this protein is Probable trafficking protein particle complex subunit 2.